The chain runs to 68 residues: Venom-like beta-defensin (68 aa).

An N-terminal signal peptide occupies residues 1–24; that stretch reads MRLLILFLAVVTLLSLAGPGSAEV. Cystine bridges form between Cys33-Cys60, Cys40-Cys54, and Cys47-Cys61.

As to expression, highly expressed in intestine, liver and spleen and expressed at lower levels in brain, kidney, lung, testis and venom gland.

It localises to the secreted. Functionally, potent antimicrobial peptide that displays activity against S.aureus and P.aeruginosa. Does not inhibit growth of E.coli. This Ornithorhynchus anatinus (Duckbill platypus) protein is Venom-like beta-defensin.